We begin with the raw amino-acid sequence, 339 residues long: Probable long-chain-alcohol O-fatty-acyltransferase 7 (339 aa).

7 helical membrane passes run 7–27, 39–59, 113–133, 143–163, 226–246, 254–274, and 287–307; these read SLIN…CLPP, IFPV…SIFT, HLST…LYVH, FLLC…LTLL, MLIG…VVFF, TGEV…EVAA, and PVVS…WLFF.

It belongs to the wax synthase family.

It is found in the membrane. The catalysed reaction is a long chain fatty alcohol + a fatty acyl-CoA = a wax ester + CoA. In terms of biological role, catalyzes the final step in the synthesis of long-chain linear esters (waxes). This is Probable long-chain-alcohol O-fatty-acyltransferase 7 (AT7) from Arabidopsis thaliana (Mouse-ear cress).